We begin with the raw amino-acid sequence, 969 residues long: Leucine--tRNA ligase (969 aa).

The segment at 1 to 23 (MTESPTTSPATGSGAAAPDSDAP) is disordered. The short motif at 78 to 89 (PYPSGEGLHVGH) is the 'HIGH' region element. The 'KMSKS' region motif lies at 737 to 741 (KIGKS). ATP is bound at residue Lys740.

The protein belongs to the class-I aminoacyl-tRNA synthetase family.

It localises to the cytoplasm. The enzyme catalyses tRNA(Leu) + L-leucine + ATP = L-leucyl-tRNA(Leu) + AMP + diphosphate. This Mycobacterium avium (strain 104) protein is Leucine--tRNA ligase.